The primary structure comprises 199 residues: NAD(P)H dehydrogenase (quinone) (199 aa).

A Flavodoxin-like domain is found at 4-190; that stretch reads MLVLYYSAYG…DGARFQGRRV (187 aa). FMN-binding positions include 10–15 and 78–80; these read SAYGHM and TRY. Tyr12 lines the NAD(+) pocket. Residue Trp98 participates in substrate binding. FMN contacts are provided by residues 113–119 and His134; that span reads STATQYG. The disordered stretch occupies residues 162-181; the sequence is GMTTTADGDGSRQPSAQELD. Over residues 163 to 177 the composition is skewed to polar residues; it reads MTTTADGDGSRQPSA.

This sequence belongs to the WrbA family. The cofactor is FMN.

It carries out the reaction a quinone + NADH + H(+) = a quinol + NAD(+). It catalyses the reaction a quinone + NADPH + H(+) = a quinol + NADP(+). This chain is NAD(P)H dehydrogenase (quinone), found in Brucella suis (strain ATCC 23445 / NCTC 10510).